The sequence spans 1666 residues: Cortactin-binding protein 2 (1666 aa).

Disordered stretches follow at residues 1-25 (MATD…APAE), 202-224 (EKKR…AEME), 366-411 (IVSS…PAIQ), 457-481 (NANN…SPTS), and 501-619 (RFTS…PKPS). The stretch at 120 to 274 (KMQERMSTQL…MTEQLKRGND (155 aa)) forms a coiled coil. Composition is skewed to low complexity over residues 385 to 398 (GPST…PSST) and 457 to 468 (NANNDQDQNGNN). Polar residues predominate over residues 469 to 481 (TQSPPSRDVSPTS). Arg-501 bears the Asymmetric dimethylarginine mark. ANK repeat units follow at residues 712-742 (GRPT…DINH), 746-775 (DGHS…QVNA), 779-808 (DGFT…NINH), 812-841 (EGQT…DRSV), 845-874 (DGWT…PACG), and 915-945 (EGWT…EPER). A Phosphoserine modification is found at Ser-1527. Over residues 1545–1566 (SESDISKIADTRDDLRRFDSSR) the composition is skewed to basic and acidic residues. Disordered regions lie at residues 1545-1601 (SESD…RSNR) and 1620-1666 (RSKI…KPNQ). Residues 1585–1594 (KEVSPLSSHQ) are compositionally biased toward polar residues. The segment covering 1627 to 1641 (SQNTKRSSSSSNTRQ) has biased composition (low complexity). Residues 1648-1666 (SKDEIWNLRNNEQIEKPNQ) are compositionally biased toward basic and acidic residues.

As to quaternary structure, interacts with CTTN/cortactin SH3 domain. Interacts with STRN, STRN4/zinedin and MOB4/phocein; this interactions mediate the association with the STRIPAK core complex and may regulate dendritic spine distribution of the STRIPAK complex in hippocampal neurons. Activation of glutamate receptors weakens the interaction with STRN and STRN4.

The protein localises to the cytoplasm. Its subcellular location is the cell cortex. It is found in the cell projection. It localises to the dendritic spine. In terms of biological role, regulates the dendritic spine distribution of CTTN/cortactin in hippocampal neurons, and thus controls dendritic spinogenesis and dendritic spine maintenance. Associates with the striatin-interacting phosphatase and kinase (STRIPAK) core complex to regulate dendritic spine distribution of the STRIPAK complex in hippocampal neurons. This chain is Cortactin-binding protein 2 (CTTNBP2), found in Echinops telfairi (Lesser hedgehog tenrec).